The following is a 266-amino-acid chain: Apoptosis regulator ced-9 (266 aa).

Residues 1 to 58 (MVDSMDMANSSQNTFRRRTMATSEMREFLSTKDAEPNNFGMQTIPESPTPSTPTRRMS) form a disordered region. Basic and acidic residues predominate over residues 24–35 (EMREFLSTKDAE). The short motif at 75-94 (IQGFVVDYFTYRIAQNGLDW) is the BH4 element. The short motif at 156-174 (NTPCPMSYGRLIGLISFGG) is the BH1 element. The BH2 signature appears at 208–223 (SWKEHNRSWADFMKLG).

It belongs to the Bcl-2 family. In terms of assembly, interacts with asymmetric homodimer ced-4; the interaction sequesters ced-4. Interacts with egl-1; the interaction results in ced-4 release. Interacts with dre-1; the interaction inhibits ced-9 activity, either directly or indirectly. Interacts with dct-1. May form a complex composed of ced-9, ced-4 and mac-1.

Its subcellular location is the perikaryon. The protein localises to the synapse. It localises to the endomembrane system. It is found in the mitochondrion membrane. Plays a major role in programmed cell death (PCD, apoptosis). egl-1 binds to and directly inhibits the activity of ced-9, releasing the cell death activator ced-4 from a ced-9/ced-4 containing protein complex and allowing ced-4 to activate the cell-killing caspase ced-3. During larval development, required for the elimination of transient presynaptic components downstream of egl-1 and upstream of ced-4 and ced-3 apoptotic pathway. In Caenorhabditis briggsae, this protein is Apoptosis regulator ced-9 (ced-9).